Reading from the N-terminus, the 507-residue chain is Probable DNA ligase (507 aa).

Residue Glu-209 participates in ATP binding. Lys-211 acts as the N6-AMP-lysine intermediate in catalysis. Residues Arg-216, Arg-231, Glu-260, Phe-300, Arg-372, and Lys-378 each contribute to the ATP site.

This sequence belongs to the ATP-dependent DNA ligase family. Requires Mg(2+) as cofactor.

It carries out the reaction ATP + (deoxyribonucleotide)n-3'-hydroxyl + 5'-phospho-(deoxyribonucleotide)m = (deoxyribonucleotide)n+m + AMP + diphosphate.. DNA ligase that seals nicks in double-stranded DNA during DNA replication, DNA recombination and DNA repair. This is Probable DNA ligase from Mycobacterium bovis (strain ATCC BAA-935 / AF2122/97).